The primary structure comprises 957 residues: Glycine dehydrogenase (decarboxylating) (957 aa).

The residue at position 708 (Lys708) is an N6-(pyridoxal phosphate)lysine.

The protein belongs to the GcvP family. As to quaternary structure, the glycine cleavage system is composed of four proteins: P, T, L and H. It depends on pyridoxal 5'-phosphate as a cofactor.

It carries out the reaction N(6)-[(R)-lipoyl]-L-lysyl-[glycine-cleavage complex H protein] + glycine + H(+) = N(6)-[(R)-S(8)-aminomethyldihydrolipoyl]-L-lysyl-[glycine-cleavage complex H protein] + CO2. The glycine cleavage system catalyzes the degradation of glycine. The P protein binds the alpha-amino group of glycine through its pyridoxal phosphate cofactor; CO(2) is released and the remaining methylamine moiety is then transferred to the lipoamide cofactor of the H protein. This Pectobacterium atrosepticum (strain SCRI 1043 / ATCC BAA-672) (Erwinia carotovora subsp. atroseptica) protein is Glycine dehydrogenase (decarboxylating).